Reading from the N-terminus, the 384-residue chain is 8-amino-7-oxononanoate synthase (384 aa).

R21 contacts substrate. A pyridoxal 5'-phosphate-binding site is contributed by 108 to 109 (GF). H133 lines the substrate pocket. 3 residues coordinate pyridoxal 5'-phosphate: S179, H207, and T233. K236 bears the N6-(pyridoxal phosphate)lysine mark. Residue T352 participates in substrate binding.

It belongs to the class-II pyridoxal-phosphate-dependent aminotransferase family. BioF subfamily. In terms of assembly, homodimer. Pyridoxal 5'-phosphate is required as a cofactor.

It carries out the reaction 6-carboxyhexanoyl-[ACP] + L-alanine + H(+) = (8S)-8-amino-7-oxononanoate + holo-[ACP] + CO2. It participates in cofactor biosynthesis; biotin biosynthesis. Its function is as follows. Catalyzes the decarboxylative condensation of pimeloyl-[acyl-carrier protein] and L-alanine to produce 8-amino-7-oxononanoate (AON), [acyl-carrier protein], and carbon dioxide. This is 8-amino-7-oxononanoate synthase from Shigella sonnei (strain Ss046).